The following is a 330-amino-acid chain: Aspartate--ammonia ligase (330 aa).

This sequence belongs to the class-II aminoacyl-tRNA synthetase family. AsnA subfamily.

It is found in the cytoplasm. It catalyses the reaction L-aspartate + NH4(+) + ATP = L-asparagine + AMP + diphosphate + H(+). Its pathway is amino-acid biosynthesis; L-asparagine biosynthesis; L-asparagine from L-aspartate (ammonia route): step 1/1. This chain is Aspartate--ammonia ligase, found in Streptococcus agalactiae serotype Ia (strain ATCC 27591 / A909 / CDC SS700).